Reading from the N-terminus, the 460-residue chain is Probable asparagine--tRNA ligase, mitochondrial (460 aa).

Belongs to the class-II aminoacyl-tRNA synthetase family.

It localises to the mitochondrion matrix. It carries out the reaction tRNA(Asn) + L-asparagine + ATP = L-asparaginyl-tRNA(Asn) + AMP + diphosphate + H(+). The chain is Probable asparagine--tRNA ligase, mitochondrial (asnS2) from Dictyostelium discoideum (Social amoeba).